Consider the following 292-residue polypeptide: Acetylglutamate kinase (292 aa).

Residues 60-61 (GG), arginine 82, and asparagine 187 contribute to the substrate site.

It belongs to the acetylglutamate kinase family. ArgB subfamily.

It is found in the cytoplasm. It catalyses the reaction N-acetyl-L-glutamate + ATP = N-acetyl-L-glutamyl 5-phosphate + ADP. It functions in the pathway amino-acid biosynthesis; L-arginine biosynthesis; N(2)-acetyl-L-ornithine from L-glutamate: step 2/4. Catalyzes the ATP-dependent phosphorylation of N-acetyl-L-glutamate. The sequence is that of Acetylglutamate kinase from Methanobrevibacter smithii (strain ATCC 35061 / DSM 861 / OCM 144 / PS).